The following is a 208-amino-acid chain: Transmembrane protein 222 (208 aa).

The interval 1-26 (MAEAEGSSLLLLPPPPPPPRMAEVEA) is disordered. At 1–55 (MAEAEGSSLLLLPPPPPPPRMAEVEAPTAAETDMKQYQGSGGVAMDVERSRFPYC) the chain is on the extracellular side. A helical transmembrane segment spans residues 56 to 76 (VVWTPIPVLTWFFPIIGHMGI). The Cytoplasmic portion of the chain corresponds to 77–164 (CTSTGVIRDF…MRYNNSTNWN (88 aa)). The chain crosses the membrane as a helical span at residues 165-185 (MVTLCFFCLLYGKYVSVGAFV). Position 186 (lysine 186) is a topological domain, extracellular. A helical transmembrane segment spans residues 187-207 (TWLPFILLLGIILTVSLVFNL). Arginine 208 is a topological domain (cytoplasmic).

Widely expressed. The highest expression is observed in the brain.

Its subcellular location is the membrane. The protein resides in the cell projection. It localises to the dendrite. This is Transmembrane protein 222 (TMEM222) from Homo sapiens (Human).